The primary structure comprises 166 residues: Early E3 18.5 kDa glycoprotein (166 aa).

Positions 1–19 are cleaved as a signal peptide; sequence MGPILVLLVLLSLLEAGSA. At 20-131 the chain is on the lumenal side; sequence NYDPCLDFDP…SKDNIVTFSI (112 aa). N-linked (GlcNAc...) asparagine; by host glycosylation occurs at Asn31. Intrachain disulfides connect Cys32–Cys50 and Cys44–Cys106. Residues Asn63, Asn67, and Asn97 are each glycosylated (N-linked (GlcNAc...) asparagine; by host). A helical transmembrane segment spans residues 132 to 152; sequence AYCLCACLLTALLCVCIHLLV. Residues 153-166 lie on the Cytoplasmic side of the membrane; sequence TTRIKNANNKEKMP. A Di-lysine motif motif is present at residues 162–166; it reads KEKMP.

The protein belongs to the adenoviridae E19 family. Both disulfide bonds are absolutely critical for the interaction with MHC antigens. Post-translationally, N-glycosylated; high-mannose.

The protein localises to the host endoplasmic reticulum membrane. Binds and retains class I heavy chains in the endoplasmic reticulum during the early period of virus infection, thereby impairing their transport to the cell surface. Also delays the expression of class I alleles that it cannot affect by direct retention. Binds transporters associated with antigen processing (TAP) and acts as a tapasin inhibitor, preventing class I/TAP association. In consequence, infected cells are masked for immune recognition by cytotoxic T-lymphocytes. The chain is Early E3 18.5 kDa glycoprotein from Human adenovirus B serotype 11 (strain BC34) (HAdV-11).